Reading from the N-terminus, the 336-residue chain is F420-dependent glucose-6-phosphate dehydrogenase (336 aa).

Aspartate 39 contributes to the coenzyme F420-(gamma-Glu)n binding site. Histidine 40 serves as the catalytic Proton donor. Residues threonine 76 and 107 to 108 contribute to the coenzyme F420-(gamma-Glu)n site; that span reads TG. The active-site Proton acceptor is glutamate 109. Coenzyme F420-(gamma-Glu)n is bound by residues asparagine 112, 177–178, and 180–181; these read GG and VV. Substrate contacts are provided by threonine 195, lysine 198, lysine 259, and arginine 283.

Belongs to the F420-dependent glucose-6-phosphate dehydrogenase family. Homodimer.

The enzyme catalyses oxidized coenzyme F420-(gamma-L-Glu)(n) + D-glucose 6-phosphate + H(+) = 6-phospho-D-glucono-1,5-lactone + reduced coenzyme F420-(gamma-L-Glu)(n). In terms of biological role, catalyzes the coenzyme F420-dependent oxidation of glucose 6-phosphate (G6P) to 6-phosphogluconolactone. Appears to have a role in resistance to oxidative stress, via its consumption of G6P that serves as a source of reducing power to combat oxidative stress in mycobacteria. This is F420-dependent glucose-6-phosphate dehydrogenase from Mycolicibacterium fortuitum (Mycobacterium fortuitum).